A 296-amino-acid chain; its full sequence is Homoserine kinase (296 aa).

Residue 85-95 participates in ATP binding; it reads PVARGLGSSAA.

It belongs to the GHMP kinase family. Homoserine kinase subfamily.

It localises to the cytoplasm. The catalysed reaction is L-homoserine + ATP = O-phospho-L-homoserine + ADP + H(+). Its pathway is amino-acid biosynthesis; L-threonine biosynthesis; L-threonine from L-aspartate: step 4/5. Its function is as follows. Catalyzes the ATP-dependent phosphorylation of L-homoserine to L-homoserine phosphate. This chain is Homoserine kinase, found in Moorella thermoacetica (strain ATCC 39073 / JCM 9320).